The primary structure comprises 123 residues: Anti-lipopolysaccharide factor (123 aa).

Positions 1–26 (MRTRVMAGLCVALVVMCLYMPQPCEA) are cleaved as a signal peptide. Cys55 and Cys76 form a disulfide bridge.

Strong expression in hemocytes, heart and muscle, with weaker expression detected in gills and hepatopancreas. No expression detected in eyes.

The protein resides in the secreted. Functionally, binds to bacterial LPS and may specifically inhibit the LPS-mediated activation of the hemolymph coagulation. It has a strong antibacterial effect especially on the growth of Gram-negative bacteria. In Scylla serrata (Mud crab), this protein is Anti-lipopolysaccharide factor.